The chain runs to 207 residues: Large ribosomal subunit protein uL4 (207 aa).

Residues 54–74 form a disordered region; sequence RSDVRGGGKKPYRQKGTGNAR.

Belongs to the universal ribosomal protein uL4 family. In terms of assembly, part of the 50S ribosomal subunit.

One of the primary rRNA binding proteins, this protein initially binds near the 5'-end of the 23S rRNA. It is important during the early stages of 50S assembly. It makes multiple contacts with different domains of the 23S rRNA in the assembled 50S subunit and ribosome. In terms of biological role, forms part of the polypeptide exit tunnel. The sequence is that of Large ribosomal subunit protein uL4 from Magnetococcus marinus (strain ATCC BAA-1437 / JCM 17883 / MC-1).